We begin with the raw amino-acid sequence, 346 residues long: Peroxidase 38 (346 aa).

The signal sequence occupies residues 1–22 (MHSSLIKLGFLLLLLQVSLSHA). Residue glutamine 23 is modified to Pyrrolidone carboxylic acid. 4 disulfide bridges follow: cysteine 33–cysteine 113, cysteine 66–cysteine 71, cysteine 119–cysteine 323, and cysteine 199–cysteine 231. The active-site Proton acceptor is the histidine 64. Ca(2+) contacts are provided by aspartate 65, valine 68, glycine 70, aspartate 72, and serine 74. An N-linked (GlcNAc...) asparagine glycan is attached at asparagine 79. Proline 161 lines the substrate pocket. Histidine 192 provides a ligand contact to heme b. A Ca(2+)-binding site is contributed by threonine 193. Asparagine 236 carries N-linked (GlcNAc...) asparagine glycosylation. Residues aspartate 244, threonine 247, and aspartate 252 each coordinate Ca(2+).

The protein belongs to the peroxidase family. Classical plant (class III) peroxidase subfamily. Heme b is required as a cofactor. Requires Ca(2+) as cofactor.

The protein resides in the secreted. Its subcellular location is the vacuole. The catalysed reaction is 2 a phenolic donor + H2O2 = 2 a phenolic radical donor + 2 H2O. Its function is as follows. Removal of H(2)O(2), oxidation of toxic reductants, biosynthesis and degradation of lignin, suberization, auxin catabolism, response to environmental stresses such as wounding, pathogen attack and oxidative stress. These functions might be dependent on each isozyme/isoform in each plant tissue. The polypeptide is Peroxidase 38 (PER38) (Arabidopsis thaliana (Mouse-ear cress)).